A 351-amino-acid chain; its full sequence is Probable sugar phosphate/phosphate translocator At5g11230 (351 aa).

10 helical membrane passes run 15 to 35, 49 to 69, 89 to 109, 113 to 133, 141 to 161, 165 to 185, 205 to 225, 236 to 256, 263 to 283, and 286 to 306; these read IVLS…VIVY, FPIS…FLII, VVPI…AYIY, SFIQ…GVLF, DTMM…YGEA, VWGV…LVLI, VAPC…FPVL, AIFG…FLLV, TMNV…WSVI, and TVTP…AYYN. The EamA domain occupies 38-156; the sequence is YILDKKMYNW…LSISFGVAIA (119 aa). The tract at residues 321–351 is disordered; it reads KKIQQADEESGRLLEEREGDVEGKKNDQSGN.

It belongs to the TPT transporter family. TPT (TC 2.A.7.9) subfamily.

The protein resides in the membrane. In Arabidopsis thaliana (Mouse-ear cress), this protein is Probable sugar phosphate/phosphate translocator At5g11230.